The chain runs to 712 residues: Glycine--tRNA ligase beta subunit (712 aa).

The protein belongs to the class-II aminoacyl-tRNA synthetase family. In terms of assembly, tetramer of two alpha and two beta subunits.

The protein resides in the cytoplasm. It catalyses the reaction tRNA(Gly) + glycine + ATP = glycyl-tRNA(Gly) + AMP + diphosphate. This is Glycine--tRNA ligase beta subunit from Dechloromonas aromatica (strain RCB).